The chain runs to 391 residues: Alanine racemase (391 aa).

The Proton acceptor; specific for D-alanine role is filled by Lys38. An N6-(pyridoxal phosphate)lysine modification is found at Lys38. Arg136 provides a ligand contact to substrate. Residue Tyr267 is the Proton acceptor; specific for L-alanine of the active site. Met315 is a substrate binding site.

It belongs to the alanine racemase family. The cofactor is pyridoxal 5'-phosphate.

The enzyme catalyses L-alanine = D-alanine. It functions in the pathway amino-acid biosynthesis; D-alanine biosynthesis; D-alanine from L-alanine: step 1/1. Catalyzes the interconversion of L-alanine and D-alanine. May also act on other amino acids. In Clostridium kluyveri (strain ATCC 8527 / DSM 555 / NBRC 12016 / NCIMB 10680 / K1), this protein is Alanine racemase (alr).